The primary structure comprises 509 residues: FAD-linked oxidoreductase anuG (509 aa).

An N-terminal signal peptide occupies residues 1–21 (MVQISNVWGFGLAIMASLAAA). The FAD-binding PCMH-type domain occupies 75–246 (YAAPKFTVVV…TSFEMSIYPT (172 aa)).

Belongs to the oxygen-dependent FAD-linked oxidoreductase family. FAD serves as cofactor.

It carries out the reaction (2S,9S)-annullatin H + 2 A = (2S,9S)-annullatin D + 2 AH2. The protein operates within secondary metabolite biosynthesis. Functionally, cytochrome P450 monooxygenase; part of the gene cluster that mediates the biosynthesis of annullatin D, an alkylated aromatic polyketide with a fused dihydrobenzofuran lactone ring system that exhibits potent agonistic activities toward the cannabinoid receptors. Within the pathway, anuG is responsible for the five-member lactone ring formation in (2S, 9S)-annullatin D via oxidative lactonization between the two hydroxyl groups. The annullatin backbone 2-hydroxymethyl-3-pentylphenol is assembled from one acetyl-CoA starter unit and 5 malonyl-CoA elongation units by cooperation of the highly reducing polyketide synthase anuA, the short-chain dehydrogenase anuB and the oxidoreductase anuC, before being hydroxylated at the C-5 alkyl chain by the cytochrome P450 monooxygenase anuE to form (8S)-annullatin E. The prenyltransferase anuH subsequently installs one isoprenyl group at the benzene ring to form (8S)-annullatin J. Enzymatic or nonenzymatic dihydro-benzofuran ring formation between the prenyl and the phenolic hydroxyl groups in (8S)-annullatin J results in two diastereomers (2S,9S)-annullatin H and compound 12. The intermediate (2S,9S)-annullatin H is then converted to (2S,9S)-annullatin D by the FAD-linked oxidoreductase anuG-catalyzed five-member lactone ring formation. The isomer 12 acts as a substrate for the short-chain dehydrogenase anuF and is oxidized to (2R)-annullatin F, which is subsequently acetylated by an acetyltransferase leading to (2R)-annullatin G formation. The remaining enzymes identified within the cluster, anuD, anuI and anuJ, seem not to be involved in annullatin biosynthesis. This chain is FAD-linked oxidoreductase anuG, found in Penicillium roqueforti (strain FM164).